Here is a 354-residue protein sequence, read N- to C-terminus: DNA integrity scanning protein DisA (354 aa).

The DAC domain occupies Gly-6–Ser-144. Residues Gly-73, Leu-91, and Thr-104–Thr-108 each bind ATP.

It belongs to the DisA family. Homooctamer. It depends on Mg(2+) as a cofactor.

The catalysed reaction is 2 ATP = 3',3'-c-di-AMP + 2 diphosphate. Participates in a DNA-damage check-point that is active prior to asymmetric division when DNA is damaged. DisA forms globular foci that rapidly scan along the chromosomes during sporulation, searching for lesions. When a lesion is present, DisA pauses at the lesion site. This triggers a cellular response that culminates in a temporary block in sporulation initiation. In terms of biological role, also has diadenylate cyclase activity, catalyzing the condensation of 2 ATP molecules into cyclic di-AMP (c-di-AMP). c-di-AMP acts as a signaling molecule that couples DNA integrity with progression of sporulation. The rise in c-di-AMP level generated by DisA while scanning the chromosome, operates as a positive signal that advances sporulation; upon encountering a lesion, the DisA focus arrests at the damaged site and halts c-di-AMP synthesis. The polypeptide is DNA integrity scanning protein DisA (Clostridium botulinum (strain Alaska E43 / Type E3)).